The sequence spans 658 residues: Katanin p80 WD40 repeat-containing subunit B1 (658 aa).

Residues 1–284 (MATPVVTKTA…VADLAICNDQ (284 aa)) are interaction with dynein. Positions 1-300 (MATPVVTKTA…SQSNVSSYVV (300 aa)) are interaction with centrosomes. WD repeat units lie at residues 18–58 (AHAS…CIMS), 61–100 (GHTSPVESVRLNTPEELIVAGSQSGSIRVWDLEAAKILRT), 103–142 (GHKANICSLDFHPYGEFVASGSQDTNIKLWDIRRKGCVFR), 145–184 (GHSQAVRCLRFSPDGKWLASAADDHTVKLWDLTAGKMMSE), 187–226 (GHTGPVNVVEFHPNEYLLASGSSDRTIRFWDLEKFQVVSC), and 229–269 (GEPG…DVVL). Positions 285-437 (LIGVAFSQSN…LPQLPVPNLE (153 aa)) are interaction with PAFAH1B1. A compositionally biased stretch (polar residues) spans 311–329 (VTQDPVQANQPLTQQTPNP). Disordered stretches follow at residues 311–419 (VTQD…EVSK) and 434–458 (PNLEVPARPSVMTSTPAPKGEPDII). Residues 352–374 (HNSESERRSPSSEDDRDERESRA) show a composition bias toward basic and acidic residues. Thr-395 is modified (phosphothreonine). Residues 436–658 (LEVPARPSVM…ELHLLMASLD (223 aa)) form an interaction with KATNA1 and NDEL1 region.

Belongs to the WD repeat KATNB1 family. In terms of assembly, interacts with KATNA1. This interaction enhances the microtubule binding and severing activity of KATNA1 and also targets this activity to the centrosome. This interaction is weakly competed by KATNBL1 which has a lower affinity for it. Interacts with ASPM; the katanin complex formation KATNA1:KATNB1 is required for the association of ASPM. Interacts with dynein, microtubules, NDEL1 and PAFAH1B1. Interacts with KATNAL1; this interaction is weakly competed by KATNBL1 which has a lower affinity for it. Interacts with CAMSAP2 and CAMSAP3; leading to regulate the length of CAMSAP-decorated microtubule stretches.

The protein localises to the cytoplasm. It is found in the cytoskeleton. The protein resides in the microtubule organizing center. It localises to the centrosome. Its subcellular location is the spindle pole. The protein localises to the spindle. Functionally, participates in a complex which severs microtubules in an ATP-dependent manner. May act to target the enzymatic subunit of this complex to sites of action such as the centrosome. Microtubule severing may promote rapid reorganization of cellular microtubule arrays and the release of microtubules from the centrosome following nucleation. Microtubule release from the mitotic spindle poles may allow depolymerization of the microtubule end proximal to the spindle pole, leading to poleward microtubule flux and poleward motion of chromosome. The function in regulating microtubule dynamics at spindle poles seems to depend on the association of the katanin KATNA1:KATNB1 complex with ASPM which recruits it to microtubules. Reversely KATNA1:KATNB1 can enhance ASPM blocking activity on microtubule minus-end growth. Microtubule release within the cell body of neurons may be required for their transport into neuronal processes by microtubule-dependent motor proteins. This transport is required for axonal growth. In Mus musculus (Mouse), this protein is Katanin p80 WD40 repeat-containing subunit B1 (Katnb1).